The primary structure comprises 310 residues: 2-dehydro-3-deoxygluconokinase (310 aa).

Residues 29 to 33 (GDTLN), Tyr89, 103 to 105 (YWR), and Arg171 contribute to the substrate site. Residues 169 to 171 (NYR), 229 to 234 (KRGADA), and 262 to 265 (AAGD) contribute to the ATP site. Asp265 is a binding site for substrate. The active-site Proton acceptor is Asp265.

Belongs to the carbohydrate kinase PfkB family.

The enzyme catalyses 2-dehydro-3-deoxy-D-gluconate + ATP = 2-dehydro-3-deoxy-6-phospho-D-gluconate + ADP + H(+). It participates in carbohydrate acid metabolism; 2-dehydro-3-deoxy-D-gluconate degradation; D-glyceraldehyde 3-phosphate and pyruvate from 2-dehydro-3-deoxy-D-gluconate: step 1/2. Catalyzes the phosphorylation of 2-keto-3-deoxygluconate (KDG) to produce 2-keto-3-deoxy-6-phosphogluconate (KDPG). In Dickeya dadantii (strain 3937) (Erwinia chrysanthemi (strain 3937)), this protein is 2-dehydro-3-deoxygluconokinase.